Reading from the N-terminus, the 140-residue chain is Large ribosomal subunit protein uL16 (140 aa).

A disordered region spans residues 1 to 24 (MALAPARTKYRKSQKGSRAGNAKR).

Belongs to the universal ribosomal protein uL16 family. In terms of assembly, part of the 50S ribosomal subunit.

Binds 23S rRNA and is also seen to make contacts with the A and possibly P site tRNAs. The protein is Large ribosomal subunit protein uL16 of Opitutus terrae (strain DSM 11246 / JCM 15787 / PB90-1).